Reading from the N-terminus, the 103-residue chain is Large ribosomal subunit protein bL21 (103 aa).

This sequence belongs to the bacterial ribosomal protein bL21 family. Part of the 50S ribosomal subunit. Contacts protein L20.

This protein binds to 23S rRNA in the presence of protein L20. This Amoebophilus asiaticus (strain 5a2) protein is Large ribosomal subunit protein bL21.